We begin with the raw amino-acid sequence, 116 residues long: NADH dehydrogenase [ubiquinone] 1 alpha subcomplex subunit 5 (116 aa).

A2 carries the post-translational modification N-acetylalanine. 3 positions are modified to N6-acetyllysine: K30, K46, and K60. At S89 the chain carries Phosphoserine. At K98 the chain carries N6-acetyllysine; alternate. K98 is modified (N6-succinyllysine; alternate).

It belongs to the complex I NDUFA5 subunit family. Complex I is composed of 45 different subunits.

It is found in the mitochondrion inner membrane. Accessory subunit of the mitochondrial membrane respiratory chain NADH dehydrogenase (Complex I), that is believed not to be involved in catalysis. Complex I functions in the transfer of electrons from NADH to the respiratory chain. The immediate electron acceptor for the enzyme is believed to be ubiquinone. The polypeptide is NADH dehydrogenase [ubiquinone] 1 alpha subcomplex subunit 5 (Ndufa5) (Rattus norvegicus (Rat)).